The following is a 360-amino-acid chain: Photosystem II protein D1 (360 aa).

A run of 3 helical transmembrane segments spans residues Tyr29–Ser46, His118–Leu133, and Trp142–Ala156. His118 lines the chlorophyll a pocket. Tyr126 provides a ligand contact to pheophytin a. Residues Asp170 and Glu189 each contribute to the [CaMn4O5] cluster site. Residues Phe197–Leu218 traverse the membrane as a helical segment. A chlorophyll a-binding site is contributed by His198. Residues His215 and Ser264 to Phe265 contribute to the a quinone site. His215 serves as a coordination point for Fe cation. Residue His272 participates in Fe cation binding. Residues Phe274–Met288 traverse the membrane as a helical segment. [CaMn4O5] cluster contacts are provided by His332, Glu333, Asp342, and Ala344. The propeptide occupies Ser345–Ala360.

This sequence belongs to the reaction center PufL/M/PsbA/D family. In terms of assembly, PSII is composed of 1 copy each of membrane proteins PsbA, PsbB, PsbC, PsbD, PsbE, PsbF, PsbH, PsbI, PsbJ, PsbK, PsbL, PsbM, PsbT, PsbX, PsbY, PsbZ, Psb30/Ycf12, at least 3 peripheral proteins of the oxygen-evolving complex and a large number of cofactors. It forms dimeric complexes. Requires The D1/D2 heterodimer binds P680, chlorophylls that are the primary electron donor of PSII, and subsequent electron acceptors. It shares a non-heme iron and each subunit binds pheophytin, quinone, additional chlorophylls, carotenoids and lipids. D1 provides most of the ligands for the Mn4-Ca-O5 cluster of the oxygen-evolving complex (OEC). There is also a Cl(-1) ion associated with D1 and D2, which is required for oxygen evolution. The PSII complex binds additional chlorophylls, carotenoids and specific lipids. as cofactor. Tyr-161 forms a radical intermediate that is referred to as redox-active TyrZ, YZ or Y-Z. Post-translationally, C-terminally processed by CTPA; processing is essential to allow assembly of the oxygen-evolving complex and thus photosynthetic growth.

The protein localises to the plastid. It localises to the chloroplast thylakoid membrane. It carries out the reaction 2 a plastoquinone + 4 hnu + 2 H2O = 2 a plastoquinol + O2. In terms of biological role, photosystem II (PSII) is a light-driven water:plastoquinone oxidoreductase that uses light energy to abstract electrons from H(2)O, generating O(2) and a proton gradient subsequently used for ATP formation. It consists of a core antenna complex that captures photons, and an electron transfer chain that converts photonic excitation into a charge separation. The D1/D2 (PsbA/PsbD) reaction center heterodimer binds P680, the primary electron donor of PSII as well as several subsequent electron acceptors. In Thalassiosira pseudonana (Marine diatom), this protein is Photosystem II protein D1.